Here is a 302-residue protein sequence, read N- to C-terminus: Pathogenicity locus probable regulatory protein HrpS (302 aa).

In terms of domain architecture, Sigma-54 factor interaction spans 9–237; that stretch reads DDLDAERVPN…LKAAAKRHVL (229 aa). ATP is bound by residues 37-44 and 99-108; these read GETGTGKD and AQGGTLYLDE. The segment at residues 279–298 is a DNA-binding region (H-T-H motif); it reads IDAASLELDIPRRTLYRRIK.

Functionally, regulates the activation of the sigma factor HrpL which itself induces the expression of hprD as well as other hrp loci which are involved in plant pathogenicity, hrmA and avr genes. Probably interacts with sigma-54. The protein is Pathogenicity locus probable regulatory protein HrpS (hrpS) of Pseudomonas syringae pv. syringae.